A 961-amino-acid chain; its full sequence is Thrombospondin-4 (961 aa).

The signal sequence occupies residues 1–23 (MLAPRGATFLLLHLALQPWLGAG). The Laminin G-like domain occupies 24–192 (AQATPQVFDL…LEELKLVVRG (169 aa)). The 40-residue stretch at 286-325 (PVRRCDSNPCFRGVRCTDTRDGFQCGPCPEGYTGNGIVCS) folds into the EGF-like 1 domain. 21 disulfide bridges follow: C290/C301, C295/C310, C313/C324, C330/C341, C335/C350, C353/C377, C383/C394, C388/C403, C406/C418, C424/C438, C432/C448, C450/C461, C477/C482, C487/C507, C523/C543, C546/C566, C582/C602, C605/C625, C643/C663, C683/C703, and C719/C940. The region spanning 326-363 (DVDECRYHPCYPGVRCVNLAPGFRCDACPVGFTGPMMQ) is the EGF-like 2; calcium-binding domain. An EGF-like 3; calcium-binding domain is found at 379–419 (DIDECRNGACVLNSICINTLGSYRCGPCKPGYIGDQMRGCK). The EGF-like 4 domain maps to 420 to 462 (MERNCRDPELNPCSVNAQCIEERQGDVTCVCGVGWAGDGYICG). TSP type-3 repeat units lie at residues 463–495 (KDVDIDSYPDEELPCSARNCKKDNCKYVPNSGQ), 496–531 (EDADRDGIGDACDDDADGDGILNEQDNCVLTHNVDQ), 532–554 (RNSDKDIFGDACDNCRNVLNNDQ), 555–590 (KDTDGDGKGDACDDDMDGDGIKNILDNCQKVPNSDQ), 591–613 (EDRDGDGVGDACDSCPEVSNPNQ), 614–651 (SDVDNDLVGDSCDTNQDSDGDGHQDSTDNCPTVINSAQ), 652–691 (LDTDKDGIGDECDDDDDNDGIPDLVPPGPDNCRLVPNPAQ), and 692–727 (EDSNSDGVGDICEADFDQDQVIDRIDVCPENAEVTL). Positions 562–564 (KGD) match the Cell attachment site motif. The segment at 581–671 (NCQKVPNSDQ…ECDDDDDNDG (91 aa)) is disordered. N612 is a glycosylation site (N-linked (GlcNAc...) asparagine). Positions 640-652 (TDNCPTVINSAQL) are enriched in polar residues. The span at 660–671 (GDECDDDDDNDG) shows a compositional bias: acidic residues. The TSP C-terminal domain occupies 731 to 945 (RAYQTVVLDP…LKYRCNDTIP (215 aa)). N941 carries an N-linked (GlcNAc...) asparagine glycan.

It belongs to the thrombospondin family. As to quaternary structure, homopentamer; disulfide-linked. Interacts with PTBP3. Interacts (via EGF-like 3; calcium-binding domain) with ATF6 and facilitates its processing, activation and nuclear translocation. Interacts with NOTCH1.

It is found in the endoplasmic reticulum. The protein resides in the sarcoplasmic reticulum. The protein localises to the secreted. Its subcellular location is the extracellular space. It localises to the extracellular matrix. In terms of biological role, adhesive glycoprotein that mediates cell-to-cell and cell-to-matrix interactions and is involved in various processes including cellular proliferation, migration, adhesion and attachment, inflammatory response to CNS injury, regulation of vascular inflammation and adaptive responses of the heart to pressure overload and in myocardial function and remodeling. Binds to structural extracellular matrix (ECM) proteins and modulates the ECM in response to tissue damage, contributing to cardioprotective and adaptive ECM remodeling. Plays a role in ER stress response, via its interaction with the activating transcription factor 6 alpha (ATF6) which produces adaptive ER stress response factors and protects myocardium from pressure overload. May contribute to spinal presynaptic hypersensitivity and neuropathic pain states after peripheral nerve injury. May play a role in regulating protective astrogenesis from the subventricular zone (SVZ) niche after injury in a NOTCH1-dependent manner. The chain is Thrombospondin-4 (THBS4) from Bos taurus (Bovine).